The sequence spans 150 residues: Ribonuclease K6 (150 aa).

A signal peptide spans Met1–Ala23. His38 serves as the catalytic Proton acceptor. Cystine bridges form between Cys46/Cys104, Cys60/Cys114, Cys78/Cys129, and Cys85/Cys92. Asn55 carries an N-linked (GlcNAc...) asparagine glycan. Substrate is bound by residues Lys61 to Thr65 and Lys86. Residue Asn100 is glycosylated (N-linked (GlcNAc...) asparagine). Arg105 is a substrate binding site. His145 (proton donor) is an active-site residue.

This sequence belongs to the pancreatic ribonuclease family. Interacts (via N-terminus) with bacterial lipopolysaccharide (LPS).

Its subcellular location is the secreted. It is found in the lysosome. It localises to the cytoplasmic granule. Functionally, ribonuclease which shows a preference for the pyrimidines uridine and cytosine. Has potent antibacterial activity against a range of Gram-positive and Gram-negative bacteria, including P.aeruginosa, A.baumanii, M.luteus, S.aureus, E.faecalis, E.faecium, S.saprophyticus and E.coli. Causes loss of bacterial membrane integrity, and also promotes agglutination of Gram-negative bacteria. Probably contributes to urinary tract sterility. Bactericidal activity is independent of RNase activity. The polypeptide is Ribonuclease K6 (RNASE6) (Aotus trivirgatus (Three-striped night monkey)).